The primary structure comprises 535 residues: Arginine-containing cyclodipeptide synthase anoA (535 aa).

The tract at residues 93–114 is disordered; sequence LLSPPREPGPIDSETKTREKKS. Residues 105–114 are compositionally biased toward basic and acidic residues; the sequence is SETKTREKKS. Residues 424–428 carry the Conserved DDXXE motif motif; it reads DDIAE.

The protein belongs to the arginine-containing cyclodipeptide synthase family.

It carries out the reaction L-tryptophyl-tRNA(Trp) + L-arginyl-tRNA(Arg) = cyclo(L-arginyl-L-tryptophyl) + tRNA(Trp) + tRNA(Arg) + H(+). The protein operates within secondary metabolite biosynthesis. Its function is as follows. Arginine-containing cyclodipeptide synthase; part of the cluster that mediates the biosynthesis of a highly modified cyclo-arginine-tryptophan dipeptide (cRW). Within the pathway, AnoA acts as the scaffold-generating enzyme and is responsible for formation of the cyclo-Arg-Trp diketopiperazine (cRW) from L-arginyl-tRNA(Arg) + L-tryptophanyl-tRNA(Trp). Additional enzymes from the cluster then further modify the cyclo-Arg-Asp diketopiperazine (cRW) scaffold. The protein is Arginine-containing cyclodipeptide synthase anoA of Aspergillus nomiae (Aspergillus nomius).